The primary structure comprises 96 residues: HssA/B-like protein 25 (96 aa).

The protein belongs to the hssA/B family.

This is HssA/B-like protein 25 (hssl25) from Dictyostelium discoideum (Social amoeba).